We begin with the raw amino-acid sequence, 328 residues long: GTP cyclohydrolase MptA (328 aa).

The protein belongs to the GTP cyclohydrolase IV family. As to quaternary structure, homodimer. Fe(2+) serves as cofactor.

The enzyme catalyses GTP + H2O = 7,8-dihydroneopterin 2',3'-cyclic phosphate + formate + diphosphate + H(+). It participates in cofactor biosynthesis; 5,6,7,8-tetrahydromethanopterin biosynthesis. Functionally, converts GTP to 7,8-dihydro-D-neopterin 2',3'-cyclic phosphate, the first intermediate in the biosynthesis of coenzyme methanopterin. The polypeptide is GTP cyclohydrolase MptA (Methanospirillum hungatei JF-1 (strain ATCC 27890 / DSM 864 / NBRC 100397 / JF-1)).